A 389-amino-acid polypeptide reads, in one-letter code: Aspartyl protease UND (389 aa).

Positions Met-1–Ala-19 are cleaved as a signal peptide. Residues Phe-58 to Asn-383 enclose the Peptidase A1 domain. Residue Asp-76 is part of the active site. A disulfide bond links Cys-86 and Cys-92. N-linked (GlcNAc...) asparagine glycosylation is present at Asn-238. The active site involves Asp-268. The cysteines at positions 304 and 346 are disulfide-linked.

This sequence belongs to the peptidase A1 family.

Its function is as follows. Probable aspartic protease activated by the transcription factor MYB80. May participate in the regulation of the timing of tapetal programmed cell death (PCD) which is critical for pollen development. In Arabidopsis thaliana (Mouse-ear cress), this protein is Aspartyl protease UND.